A 692-amino-acid chain; its full sequence is 5-taurinomethyluridine-[tRNA] synthase subunit MTO1, mitochondrial (692 aa).

A mitochondrion-targeting transit peptide spans 1 to 25 (MFYFRGCGRWVAASFTKLQFPLARL). FAD contacts are provided by residues 43-48 (GGGHAG), Val155, Ser218, and Gln407. Lys508 carries the N6-methyllysine modification.

This sequence belongs to the MnmG family. In terms of assembly, homodimer; forms a dimer in the presence of potassium. Interacts with GTPBP3; forms the GTPBP3-MTO1 complex composed of homodimers of GTPBP3 and MTO1. FAD serves as cofactor.

Its subcellular location is the mitochondrion. The enzyme catalyses 5,10-methylenetetrahydrofolate + uridine(34) in tRNA + taurine + GTP + A + H2O = 5-taurinomethyluridine(34) in tRNA + 7,8-dihydrofolate + GDP + AH2 + phosphate + H(+). Component of the GTPBP3-MTO1 complex that catalyzes the 5-taurinomethyluridine (taum(5)U) modification at the 34th wobble position (U34) of mitochondrial tRNAs (mt-tRNAs), which plays a role in mt-tRNA decoding and mitochondrial translation. Taum(5)U formation on mammalian mt-tRNA requires the presence of both GTPBP3-mediated GTPase activity and MTO1 catalytic activity. This chain is 5-taurinomethyluridine-[tRNA] synthase subunit MTO1, mitochondrial (MTO1), found in Pongo abelii (Sumatran orangutan).